A 636-amino-acid polypeptide reads, in one-letter code: Probable potassium transport system protein Kup (636 aa).

Transmembrane regions (helical) follow at residues 22-42, 64-84, 115-135, 150-170, 182-202, 220-240, 261-281, 293-313, 351-371, 383-403, 408-428, and 433-453; these read VGLL…SPLY, ILSL…VMFI, LMVI…MITP, FDGI…ALFL, LFGP…VHGI, FFVV…LALT, WFIL…ALLL, LLAP…ATVI, IYIG…VIGF, VAVT…MLLL, PLLA…FFAA, and IVQG…LMST.

The protein belongs to the HAK/KUP transporter (TC 2.A.72) family.

It is found in the cell inner membrane. It carries out the reaction K(+)(in) + H(+)(in) = K(+)(out) + H(+)(out). Functionally, transport of potassium into the cell. Likely operates as a K(+):H(+) symporter. This is Probable potassium transport system protein Kup from Pseudomonas putida (strain ATCC 700007 / DSM 6899 / JCM 31910 / BCRC 17059 / LMG 24140 / F1).